Reading from the N-terminus, the 719-residue chain is Putative ankyrin repeat protein RBE_0319 (719 aa).

ANK repeat units lie at residues 377–406, 408–438, 442–472, 476–506, 510–540, 544–572, 576–605, 609–639, and 642–672; these read VAEELLFTATYYQNINIIKQIIETKIEISS, TLIKALYINFTSDNKEILDYLLSFKGLNINE, NGGTLLDYAITFNKLDIVKKLLSHENIEVNK, YGFTILEQAINDDKLEIVKLLLSCKSLEINQ, YQTTPLQQAINGDKLEIVKLLLSHPDIKFNE, LGYTSLDWVIICNKLEIFKVLMPHLDINQ, DGYTPLEWSIYNSYEVFQTLLLRPDINVNE, HGLTPLQLAIIDHNDQMIQALLSHKNIEVSE, and QYGTPLELVINNSNDTALKLLLSHPKINLNK.

The protein is Putative ankyrin repeat protein RBE_0319 of Rickettsia bellii (strain RML369-C).